The primary structure comprises 433 residues: Protein disulfide-isomerase A6 homolog (433 aa).

A signal peptide spans 1 to 19 (MRQLASILLLAFVVGSVSA). 2 consecutive Thioredoxin domains span residues 20–119 (FYSP…GQRT) and 120–267 (AKAI…KHVA). Active-site nucleophile residues include Cys55, Cys58, Cys186, and Cys189. Cystine bridges form between Cys55/Cys58 and Cys186/Cys189. The N-linked (GlcNAc...) asparagine glycan is linked to Asn279. The disordered stretch occupies residues 405–433 (VDPWDGKDGQLPTEEDIDLSDIDLDKDEL). Residues 417–433 (TEEDIDLSDIDLDKDEL) are compositionally biased toward acidic residues. The short motif at 430–433 (KDEL) is the Prevents secretion from ER element.

The protein belongs to the protein disulfide isomerase family. In terms of assembly, interacts with Drpr (via extracellular region). In the blastoderm embryo, expression starts at the anterior and posterior poles and later appears as broad stripes. Following gastrulation, expressed in midline precursor cells and the posterior head with low levels present throughout the embryo. During germ band extension, weak dorsoventral stripes of expression are evident. Midline expression begins and is retained throughout embryogenesis in clusters of cells in each segment in the central nervous system. At least some of the midline expression occurs in VUM neurons.

The protein localises to the endoplasmic reticulum lumen. It is found in the cell surface. The catalysed reaction is Catalyzes the rearrangement of -S-S- bonds in proteins.. Its function is as follows. Binds to both apoptotic cells and phagocytes and promotes Drpr-dependent phagocytosis of apoptotic cells. This chain is Protein disulfide-isomerase A6 homolog, found in Drosophila melanogaster (Fruit fly).